A 135-amino-acid chain; its full sequence is MKEKNILFFFSFLINYLDNLSKNFCFRDYISFELNLLAETGYKLDLTKCCVSHVTTDLTYVSPKSARALSYKVGKPYRDKLLILPKFLLAKDSEITLEEKKQALTLTNYFFNRYLFHNNRQVKAREEFIEYITNI.

This is an uncharacterized protein from Rickettsia prowazekii (strain Madrid E).